We begin with the raw amino-acid sequence, 220 residues long: Zinc-finger homeodomain protein 2 (220 aa).

Residues M1–E11 are compositionally biased toward acidic residues. The interval M1–S40 is disordered. A compositionally biased stretch (gly residues) spans S31 to S40. The segment at Y49 to E98 adopts a ZF-HD dimerization-type zinc-finger fold. The interval E100–F160 is disordered. A DNA-binding region (homeobox; atypical) is located at residues T157–P220.

In terms of assembly, homo or heterodimer. Interacts with ZHD1, ZHD3, ZHD4, ZHD5, ZHD6, ZHD7, ZHD8, ZHD9, ZHD10 and ZHD11. In terms of tissue distribution, mostly expressed in flowers and, to a lower extent, in inflorescence, stems and leaves.

Its subcellular location is the nucleus. Essential protein. Putative transcription factor. This Arabidopsis thaliana (Mouse-ear cress) protein is Zinc-finger homeodomain protein 2 (ZHD1).